The sequence spans 353 residues: Photosystem II protein D1 (353 aa).

T2 carries the post-translational modification N-acetylthreonine. T2 is modified (phosphothreonine). The next 3 helical transmembrane spans lie at 29-46 (YIGW…TATS), 118-133 (HFLL…EWEL), and 142-156 (WIAV…AATA). H118 serves as a coordination point for chlorophyll a. Y126 serves as a coordination point for pheophytin a. D170 and E189 together coordinate [CaMn4O5] cluster. Residues 197–218 (FHMLGVAGVFGGSLFSAMHGSL) traverse the membrane as a helical segment. H198 is a binding site for chlorophyll a. A quinone-binding positions include H215 and 264–265 (SF). H215 is a Fe cation binding site. H272 serves as a coordination point for Fe cation. Residues 274-288 (FLAAWPVVGIWFTAL) form a helical membrane-spanning segment. 4 residues coordinate [CaMn4O5] cluster: H332, E333, D342, and A344. The propeptide occupies 345–353 (AIEAPATNG).

It belongs to the reaction center PufL/M/PsbA/D family. In terms of assembly, PSII is composed of 1 copy each of membrane proteins PsbA, PsbB, PsbC, PsbD, PsbE, PsbF, PsbH, PsbI, PsbJ, PsbK, PsbL, PsbM, PsbT, PsbX, PsbY, PsbZ, Psb30/Ycf12, at least 3 peripheral proteins of the oxygen-evolving complex and a large number of cofactors. It forms dimeric complexes. Requires The D1/D2 heterodimer binds P680, chlorophylls that are the primary electron donor of PSII, and subsequent electron acceptors. It shares a non-heme iron and each subunit binds pheophytin, quinone, additional chlorophylls, carotenoids and lipids. D1 provides most of the ligands for the Mn4-Ca-O5 cluster of the oxygen-evolving complex (OEC). There is also a Cl(-1) ion associated with D1 and D2, which is required for oxygen evolution. The PSII complex binds additional chlorophylls, carotenoids and specific lipids. as cofactor. In terms of processing, tyr-161 forms a radical intermediate that is referred to as redox-active TyrZ, YZ or Y-Z. Post-translationally, C-terminally processed by CTPA; processing is essential to allow assembly of the oxygen-evolving complex and thus photosynthetic growth.

The protein resides in the plastid membrane. It catalyses the reaction 2 a plastoquinone + 4 hnu + 2 H2O = 2 a plastoquinol + O2. In terms of biological role, photosystem II (PSII) is a light-driven water:plastoquinone oxidoreductase that uses light energy to abstract electrons from H(2)O, generating O(2) and a proton gradient subsequently used for ATP formation. It consists of a core antenna complex that captures photons, and an electron transfer chain that converts photonic excitation into a charge separation. The D1/D2 (PsbA/PsbD) reaction center heterodimer binds P680, the primary electron donor of PSII as well as several subsequent electron acceptors. The chain is Photosystem II protein D1 from Cuscuta reflexa (Southern Asian dodder).